A 198-amino-acid chain; its full sequence is 7-methyl-GTP pyrophosphatase (198 aa).

The Proton acceptor role is filled by Asp-75.

The protein belongs to the Maf family. YceF subfamily. A divalent metal cation is required as a cofactor.

It localises to the cytoplasm. The enzyme catalyses N(7)-methyl-GTP + H2O = N(7)-methyl-GMP + diphosphate + H(+). In terms of biological role, nucleoside triphosphate pyrophosphatase that hydrolyzes 7-methyl-GTP (m(7)GTP). May have a dual role in cell division arrest and in preventing the incorporation of modified nucleotides into cellular nucleic acids. The sequence is that of 7-methyl-GTP pyrophosphatase from Bartonella henselae (strain ATCC 49882 / DSM 28221 / CCUG 30454 / Houston 1) (Rochalimaea henselae).